A 623-amino-acid polypeptide reads, in one-letter code: MSSLPTSDGFNHQAHPSGQRPEIGSPPSLAHSVSASVCPFKPSDPDSIEPKAVKAVKALKASAEFQITFERKEQLPLQDPSDCASSADNAPANQTPAIPLQNSLKEAIVADNLEKSAEGSTQGLKSHLHTRQEASLSVTTTRMQEPQRLIGEKGWHPEYQDPSQVNGLQQHEEPRNEQHEVVQQNAPHDPEHLCNTGDLELLGERQQNQPKSVGLETAVRGDRPQQDVDLPGTEKNILPYGCFGCSSSETFMEIDTVEQSLVAVLNSAGGQNTSVRNISASDLTVDNPLMEVETLKCNPSSEFLSNPTSTQNLQLPESSVEMSGTNKEYGNHPSSLSLCGTCQPSVESAEESCSSITAALKELHELLVISSKPALENTSEEVTCRSEIVTEGQTDVKDLSERWTQSEHLTAAQNEQCSQVSFYQATSVSVKTEELTDTSTDAGTEDVENITSSGPGDGLLVDKENVPRSRESVNESSLVTLDSAKTSNQPHCTLGVEISPGLLAGEEGALNQTSEQTESLSSSFILVKDLGQGTQNPVTNRPETRENVCPEAAGLRQEFEPPTSHPSSSPSFLAPLIFPAADIDRILRAGFTLQEALGALHRVGGNADLALLVLLAKNIVVPT.

Composition is skewed to polar residues over residues 1–16, 83–99, and 133–144; these read MSSLPTSDGFNHQAHP, CASSADNAPANQTPAIP, and EASLSVTTTRMQ. Disordered stretches follow at residues 1–48, 71–99, 116–189, and 433–493; these read MSSL…PDSI, RKEQLPLQDPSDCASSADNAPANQTPAIP, SAEG…APHD, and EELT…PHCT. 3 stretches are compositionally biased toward basic and acidic residues: residues 150–159, 170–180, and 460–473; these read IGEKGWHPEY, QHEEPRNEQHE, and LVDKENVPRSRESV. Over residues 474–491 the composition is skewed to polar residues; that stretch reads NESSLVTLDSAKTSNQPH. The 41-residue stretch at 577 to 617 folds into the UBA domain; sequence IFPAADIDRILRAGFTLQEALGALHRVGGNADLALLVLLAK.

Interacts with YRDC. Renal outer cortex and outer medulla, small intestine and liver.

The protein localises to the cell membrane. The protein resides in the nucleus. Its subcellular location is the golgi apparatus. It localises to the trans-Golgi network. Functionally, mediates transcriptional and post-transcriptional regulation of SLC5A1. Inhibits a dynamin and PKC-dependent exocytotic pathway of SLC5A1. Also involved in transcriptional regulation of SLC22A2. Exhibits glucose-dependent, short-term inhibition of SLC5A1 and SLC22A2 by inhibiting the release of vesicles from the trans-Golgi network. The protein is Regulatory solute carrier protein family 1 member 1 (RSC1A1) of Sus scrofa (Pig).